Here is a 376-residue protein sequence, read N- to C-terminus: Alcohol dehydrogenase 6 (376 aa).

Cys-47, His-69, Cys-99, Cys-102, Cys-105, Cys-113, and Cys-175 together coordinate Zn(2+). NAD(+)-binding positions include 200-205 (GLGGVG), Asp-224, Arg-229, 293-295 (VGA), and Arg-371.

Belongs to the zinc-containing alcohol dehydrogenase family. Class-V subfamily. As to quaternary structure, dimer. Zn(2+) serves as cofactor.

It localises to the cytoplasm. It carries out the reaction a primary alcohol + NAD(+) = an aldehyde + NADH + H(+). It catalyses the reaction a secondary alcohol + NAD(+) = a ketone + NADH + H(+). Alcohol dehydrogenase. Catalyzes the NAD-dependent oxidation of primary alcohols to the corresponding aldehydes. Oxidizes secondary alcohols to the corresponding ketones. In Rattus norvegicus (Rat), this protein is Alcohol dehydrogenase 6 (Adh6).